We begin with the raw amino-acid sequence, 21 residues long: Ferredoxin (21 aa).

A 4Fe-4S ferredoxin-type domain is found at 2 to 21 (KVKVDADACIGCGVCVELCP). [4Fe-4S] cluster-binding residues include C10, C13, and C16.

Monomer. [4Fe-4S] cluster is required as a cofactor.

In terms of biological role, ferredoxins are iron-sulfur proteins that transfer electrons in a wide variety of metabolic reactions. The chain is Ferredoxin (fdxA) from Pyrococcus woesei.